The primary structure comprises 177 residues: RNA silencing suppressor (177 aa).

As to quaternary structure, homooctamer. The eight monomers assemble into a closed ring that binds RNA.

The protein resides in the host cytoplasm. In terms of biological role, acts as a suppressor of RNA-mediated gene silencing, also known as post-transcriptional gene silencing (PTGS), a mechanism of plant viral defense that limits the accumulation of viral RNAs. Binds to ssRNAs and dsRNAs in vitro. Also functions as a replication enhancer. In Beta vulgaris (Sugar beet), this protein is RNA silencing suppressor.